The chain runs to 139 residues: ATP synthase epsilon chain 2 (139 aa).

The protein belongs to the ATPase epsilon chain family. F-type ATPases have 2 components, CF(1) - the catalytic core - and CF(0) - the membrane proton channel. CF(1) has five subunits: alpha(3), beta(3), gamma(1), delta(1), epsilon(1). CF(0) has three main subunits: a, b and c.

The protein localises to the cell inner membrane. Functionally, produces ATP from ADP in the presence of a proton gradient across the membrane. The chain is ATP synthase epsilon chain 2 from Paraburkholderia xenovorans (strain LB400).